We begin with the raw amino-acid sequence, 133 residues long: Ribosome-binding factor A (133 aa).

This sequence belongs to the RbfA family. Monomer. Binds 30S ribosomal subunits, but not 50S ribosomal subunits or 70S ribosomes.

The protein localises to the cytoplasm. Its function is as follows. One of several proteins that assist in the late maturation steps of the functional core of the 30S ribosomal subunit. Associates with free 30S ribosomal subunits (but not with 30S subunits that are part of 70S ribosomes or polysomes). Required for efficient processing of 16S rRNA. May interact with the 5'-terminal helix region of 16S rRNA. The protein is Ribosome-binding factor A of Psychromonas ingrahamii (strain DSM 17664 / CCUG 51855 / 37).